Here is a 179-residue protein sequence, read N- to C-terminus: MAHEIVDGSSMQRALTRITYEIIEQNKGVDNLVFVGIKTRGVYLAQRLAKRMEQLEGVKVPVGSLDITLYRDDRHQPDHHVEPTVNATDVDVDINDKHVILVDDVLYTGRTVRAALDALMDLGRPKRISLAVLVDRGHRELPIRPDFVGKNIPTSNSETVHVAVEEYDGHEDISLENRK.

Positions 99–111 (VILVDDVLYTGRT) match the PRPP-binding motif.

This sequence belongs to the purine/pyrimidine phosphoribosyltransferase family. PyrR subfamily. Homodimer and homohexamer; in equilibrium.

It carries out the reaction UMP + diphosphate = 5-phospho-alpha-D-ribose 1-diphosphate + uracil. Functionally, regulates transcriptional attenuation of the pyrimidine nucleotide (pyr) operon by binding in a uridine-dependent manner to specific sites on pyr mRNA. This disrupts an antiterminator hairpin in the RNA and favors formation of a downstream transcription terminator, leading to a reduced expression of downstream genes. In terms of biological role, also displays a weak uracil phosphoribosyltransferase activity which is not physiologically significant. This chain is Bifunctional protein PyrR, found in Limosilactobacillus fermentum (strain NBRC 3956 / LMG 18251) (Lactobacillus fermentum).